Consider the following 270-residue polypeptide: Probable inner membrane protein BTH_II0599 (270 aa).

Helical transmembrane passes span 24–44 (RNPL…MLVS), 45–65 (LVPV…AVGF), 98–118 (LLTL…CSAL), 150–170 (ALIA…APVL), 198–218 (VYGL…AALM), and 226–246 (YALM…YCSF).

Its subcellular location is the cell inner membrane. Functionally, (Microbial infection) Probably transports the toxic C-terminal region of CdiA-2 from B.pseudomallei strain 1026b across the inner membrane to the cytoplasm, where CdiA has a toxic effect. Expression in E.coli makes the bacteria sensitive to the tRNase domain of B.pseudomallei strain 1026b CdiA-2. This chain is Probable inner membrane protein BTH_II0599, found in Burkholderia thailandensis (strain ATCC 700388 / DSM 13276 / CCUG 48851 / CIP 106301 / E264).